The sequence spans 98 residues: Small ribosomal subunit protein bS18 (98 aa).

Belongs to the bacterial ribosomal protein bS18 family. In terms of assembly, part of the 30S ribosomal subunit. Forms a tight heterodimer with protein bS6.

In terms of biological role, binds as a heterodimer with protein bS6 to the central domain of the 16S rRNA, where it helps stabilize the platform of the 30S subunit. The chain is Small ribosomal subunit protein bS18 from Flavobacterium psychrophilum (strain ATCC 49511 / DSM 21280 / CIP 103535 / JIP02/86).